A 57-amino-acid polypeptide reads, in one-letter code: Potassium channel toxin MeuTXKalpha2 (57 aa).

The signal sequence occupies residues 1 to 19 (MSRLYAIILIALVFNVIMT). Residues 20–28 (IMPDMKVEA) constitute a propeptide that is removed on maturation. 3 disulfides stabilise this stretch: C31–C47, C34–C52, and C38–C54.

Belongs to the short scorpion toxin superfamily. Potassium channel inhibitor family. Alpha-KTx 08 subfamily. As to expression, expressed by the venom gland.

The protein localises to the secreted. Inhibits Kv1.1/KCNA1, Kv1.3/KCNA3 and Shaker potassium channels. This Mesobuthus eupeus (Lesser Asian scorpion) protein is Potassium channel toxin MeuTXKalpha2.